We begin with the raw amino-acid sequence, 607 residues long: Elongation factor 4 (607 aa).

The tr-type G domain occupies 11-193 (EKIRNFSIIA…QIVEKVPAPT (183 aa)). Residues 23-28 (DHGKST) and 140-143 (NKID) contribute to the GTP site.

It belongs to the TRAFAC class translation factor GTPase superfamily. Classic translation factor GTPase family. LepA subfamily.

It localises to the cell membrane. It catalyses the reaction GTP + H2O = GDP + phosphate + H(+). Functionally, required for accurate and efficient protein synthesis under certain stress conditions. May act as a fidelity factor of the translation reaction, by catalyzing a one-codon backward translocation of tRNAs on improperly translocated ribosomes. Back-translocation proceeds from a post-translocation (POST) complex to a pre-translocation (PRE) complex, thus giving elongation factor G a second chance to translocate the tRNAs correctly. Binds to ribosomes in a GTP-dependent manner. The sequence is that of Elongation factor 4 from Streptococcus gordonii (strain Challis / ATCC 35105 / BCRC 15272 / CH1 / DL1 / V288).